We begin with the raw amino-acid sequence, 525 residues long: GMP synthase [glutamine-hydrolyzing] (525 aa).

The Glutamine amidotransferase type-1 domain occupies 9-207 (RILILDFGSQ…VRDICQCEAL (199 aa)). The active-site Nucleophile is the Cys86. Catalysis depends on residues His181 and Glu183. The 193-residue stretch at 208 to 400 (WTPAKIIDDA…LGLPYDMLYR (193 aa)) folds into the GMPS ATP-PPase domain. 235-241 (SGGVDSS) is an ATP binding site.

In terms of assembly, homodimer.

The catalysed reaction is XMP + L-glutamine + ATP + H2O = GMP + L-glutamate + AMP + diphosphate + 2 H(+). It participates in purine metabolism; GMP biosynthesis; GMP from XMP (L-Gln route): step 1/1. Its function is as follows. Catalyzes the synthesis of GMP from XMP. The polypeptide is GMP synthase [glutamine-hydrolyzing] (Shigella dysenteriae serotype 1 (strain Sd197)).